The primary structure comprises 38 residues: Mu-agatoxin-Hc1c (38 aa).

4 cysteine pairs are disulfide-bonded: Cys3–Cys19, Cys10–Cys24, Cys18–Cys34, and Cys26–Cys32. Ser38 carries the serine amide modification.

Belongs to the neurotoxin 07 (Beta/delta-agtx) family. 02 (aga-3) subfamily. As to expression, expressed by the venom gland.

Its subcellular location is the secreted. Insecticidal neurotoxin that induces irreversible neuromuscular blockade in house crickets (A.domesticus). Modifies presynaptic voltage-gated sodium channels (Nav), causing them to open at the normal resting potential of the nerve. This leads to spontaneous release of neurotransmitter and repetitive action potentials in motor neurons. The protein is Mu-agatoxin-Hc1c of Hololena curta (Funnel-web spider).